A 64-amino-acid polypeptide reads, in one-letter code: Tracheal antimicrobial peptide (64 aa).

Positions 1-26 (MRLHHLLLALLFLVLSAWSGFTQGVG) are cleaved as a signal peptide. 3 cysteine pairs are disulfide-bonded: C31–C60, C38–C53, and C43–C61.

The protein belongs to the beta-defensin family. LAP/TAP subfamily. As to expression, tracheal epithelium.

It is found in the secreted. In terms of biological role, has antibacterial activity in vitro against Escherichia coli, Staphylococcus aureus, Klebsiella pneumonia, and Pseudomonas aeruginosa. In addition, the peptide is active against Candida albicans, indicating a broad spectrum of activity. This chain is Tracheal antimicrobial peptide, found in Bos taurus (Bovine).